A 97-amino-acid chain; its full sequence is Putative membrane protein insertion efficiency factor (97 aa).

The disordered stretch occupies residues 68–97; it reads VPGTELNTAPRSGQACNPTESTHSTTQTRH. Residues 72 to 97 show a composition bias toward polar residues; it reads ELNTAPRSGQACNPTESTHSTTQTRH.

It belongs to the UPF0161 family.

The protein localises to the cell inner membrane. Functionally, could be involved in insertion of integral membrane proteins into the membrane. This chain is Putative membrane protein insertion efficiency factor, found in Marinobacter nauticus (strain ATCC 700491 / DSM 11845 / VT8) (Marinobacter aquaeolei).